The chain runs to 269 residues: Ribosomal RNA small subunit methyltransferase A (269 aa).

Residues N18, L20, G45, E66, D91, and N112 each coordinate S-adenosyl-L-methionine.

This sequence belongs to the class I-like SAM-binding methyltransferase superfamily. rRNA adenine N(6)-methyltransferase family. RsmA subfamily.

The protein localises to the cytoplasm. The catalysed reaction is adenosine(1518)/adenosine(1519) in 16S rRNA + 4 S-adenosyl-L-methionine = N(6)-dimethyladenosine(1518)/N(6)-dimethyladenosine(1519) in 16S rRNA + 4 S-adenosyl-L-homocysteine + 4 H(+). In terms of biological role, specifically dimethylates two adjacent adenosines (A1518 and A1519) in the loop of a conserved hairpin near the 3'-end of 16S rRNA in the 30S particle. May play a critical role in biogenesis of 30S subunits. This is Ribosomal RNA small subunit methyltransferase A from Vibrio parahaemolyticus serotype O3:K6 (strain RIMD 2210633).